Reading from the N-terminus, the 450-residue chain is Chromosomal replication initiator protein DnaA (450 aa).

Positions 1-71 are domain I, interacts with DnaA modulators; that stretch reads MEDVWLQAQS…SVRSLTDSHF (71 aa). The segment at 71 to 113 is domain II; the sequence is FQVELQVAARQQEKTAKSPRKSHTEDELGPVESEKCAPAEFST. The segment at 82 to 103 is disordered; the sequence is QEKTAKSPRKSHTEDELGPVES. The domain III, AAA+ region stretch occupies residues 114–330; sequence NLNAKYTFDT…GMLIRLGAVA (217 aa). The ATP site is built by G158, G160, K161, and T162. Residues 331-450 form a domain IV, binds dsDNA region; it reads SLTGKNITLD…IETLRKGLLN (120 aa).

This sequence belongs to the DnaA family. Oligomerizes as a right-handed, spiral filament on DNA at oriC.

The protein localises to the cytoplasm. Functionally, plays an essential role in the initiation and regulation of chromosomal replication. ATP-DnaA binds to the origin of replication (oriC) to initiate formation of the DNA replication initiation complex once per cell cycle. Binds the DnaA box (a 9 base pair repeat at the origin) and separates the double-stranded (ds)DNA. Forms a right-handed helical filament on oriC DNA; dsDNA binds to the exterior of the filament while single-stranded (ss)DNA is stabiized in the filament's interior. The ATP-DnaA-oriC complex binds and stabilizes one strand of the AT-rich DNA unwinding element (DUE), permitting loading of DNA polymerase. After initiation quickly degrades to an ADP-DnaA complex that is not apt for DNA replication. Binds acidic phospholipids. This is Chromosomal replication initiator protein DnaA from Geobacter metallireducens (strain ATCC 53774 / DSM 7210 / GS-15).